The chain runs to 293 residues: Ribosomal protein L11 methyltransferase (293 aa).

T145, G166, D188, and N230 together coordinate S-adenosyl-L-methionine.

It belongs to the methyltransferase superfamily. PrmA family.

The protein resides in the cytoplasm. The catalysed reaction is L-lysyl-[protein] + 3 S-adenosyl-L-methionine = N(6),N(6),N(6)-trimethyl-L-lysyl-[protein] + 3 S-adenosyl-L-homocysteine + 3 H(+). Methylates ribosomal protein L11. This is Ribosomal protein L11 methyltransferase from Shewanella piezotolerans (strain WP3 / JCM 13877).